We begin with the raw amino-acid sequence, 500 residues long: Glutamate--tRNA ligase (500 aa).

The short motif at 12–22 (PSPTGHLHIGN) is the 'HIGH' region element. Positions 259–263 (KLSKR) match the 'KMSKS' region motif. ATP is bound at residue lysine 262.

The protein belongs to the class-I aminoacyl-tRNA synthetase family. Glutamate--tRNA ligase type 1 subfamily. As to quaternary structure, monomer.

The protein resides in the cytoplasm. The enzyme catalyses tRNA(Glu) + L-glutamate + ATP = L-glutamyl-tRNA(Glu) + AMP + diphosphate. Its function is as follows. Catalyzes the attachment of glutamate to tRNA(Glu) in a two-step reaction: glutamate is first activated by ATP to form Glu-AMP and then transferred to the acceptor end of tRNA(Glu). The sequence is that of Glutamate--tRNA ligase from Lactobacillus delbrueckii subsp. bulgaricus.